The chain runs to 227 residues: MKLLIVEDEKKTGEYLTKGLTEAGFVVDLADNGLNGYHLAMTGDYDLIILDIMLPDVNGWDIVRMLRSANKGMPILLLTALGTIEHRVKGLELGADDYLVKPFAFAELLARVRTLLRRGAAVIIESQFQVADLMVDLVSRKVTRSGTRITLTSKEFTLLEFFLRHQGEVLPRSLIASQVWDMNFDSDTNAIDVAVKRLRGKIDNDFEPKLIQTVRGVGYMLEVPDGQ.

The 115-residue stretch at 2 to 116 (KLLIVEDEKK…ELLARVRTLL (115 aa)) folds into the Response regulatory domain. At Asp51 the chain carries 4-aspartylphosphate. Residues 125 to 223 (ESQFQVADLM…VRGVGYMLEV (99 aa)) constitute a DNA-binding region (ompR/PhoB-type).

In terms of processing, phosphorylated by CusS.

The protein resides in the cytoplasm. In terms of biological role, member of the two-component regulatory system CusS/CusR involved in response to copper and silver. This is Transcriptional regulatory protein CusR (cusR) from Escherichia coli O6:H1 (strain CFT073 / ATCC 700928 / UPEC).